Consider the following 429-residue polypeptide: 3-phosphoshikimate 1-carboxyvinyltransferase (429 aa).

Residues lysine 20, serine 21, and arginine 25 each coordinate 3-phosphoshikimate. Residue lysine 20 participates in phosphoenolpyruvate binding. Phosphoenolpyruvate-binding residues include glycine 89 and arginine 118. 3-phosphoshikimate contacts are provided by serine 164, serine 165, glutamine 166, serine 192, aspartate 311, and lysine 338. Glutamine 166 provides a ligand contact to phosphoenolpyruvate. The active-site Proton acceptor is aspartate 311. Phosphoenolpyruvate is bound by residues arginine 342 and arginine 384.

It belongs to the EPSP synthase family. Monomer.

Its subcellular location is the cytoplasm. The catalysed reaction is 3-phosphoshikimate + phosphoenolpyruvate = 5-O-(1-carboxyvinyl)-3-phosphoshikimate + phosphate. It participates in metabolic intermediate biosynthesis; chorismate biosynthesis. Functionally, catalyzes the transfer of the enolpyruvyl moiety of phosphoenolpyruvate (PEP) to the 5-hydroxyl of shikimate-3-phosphate (S3P) to produce enolpyruvyl shikimate-3-phosphate and inorganic phosphate. In Methanococcus maripaludis (strain DSM 14266 / JCM 13030 / NBRC 101832 / S2 / LL), this protein is 3-phosphoshikimate 1-carboxyvinyltransferase.